A 255-amino-acid chain; its full sequence is Adenosylcobinamide-GDP ribazoletransferase (255 aa).

7 helical membrane passes run 33 to 53 (IFLP…IELF), 57 to 77 (FPGF…SGAL), 107 to 127 (VGSM…GSYA), 136 to 156 (FTVL…IYSF), 174 to 194 (AGLI…AAFF), 196 to 216 (FSLI…FVVA), and 234 to 254 (IMEL…NIGV).

It belongs to the CobS family. Mg(2+) serves as cofactor.

It localises to the cell membrane. It carries out the reaction alpha-ribazole + adenosylcob(III)inamide-GDP = adenosylcob(III)alamin + GMP + H(+). The catalysed reaction is alpha-ribazole 5'-phosphate + adenosylcob(III)inamide-GDP = adenosylcob(III)alamin 5'-phosphate + GMP + H(+). It functions in the pathway cofactor biosynthesis; adenosylcobalamin biosynthesis; adenosylcobalamin from cob(II)yrinate a,c-diamide: step 7/7. Its function is as follows. Joins adenosylcobinamide-GDP and alpha-ribazole to generate adenosylcobalamin (Ado-cobalamin). Also synthesizes adenosylcobalamin 5'-phosphate from adenosylcobinamide-GDP and alpha-ribazole 5'-phosphate. This Carboxydothermus hydrogenoformans (strain ATCC BAA-161 / DSM 6008 / Z-2901) protein is Adenosylcobinamide-GDP ribazoletransferase.